A 105-amino-acid polypeptide reads, in one-letter code: Small ribosomal subunit protein eS24 (105 aa).

The interval 86 to 105 is disordered; it reads LERNKIEADEEADEEAAEEA. Residues 93-105 show a composition bias toward acidic residues; it reads ADEEADEEAAEEA.

The protein belongs to the eukaryotic ribosomal protein eS24 family.

This Natronomonas pharaonis (strain ATCC 35678 / DSM 2160 / CIP 103997 / JCM 8858 / NBRC 14720 / NCIMB 2260 / Gabara) (Halobacterium pharaonis) protein is Small ribosomal subunit protein eS24.